The chain runs to 542 residues: CTP synthase (542 aa).

The interval 1 to 265 (MARYVFITGG…DSEVLSAFGI (265 aa)) is amidoligase domain. Ser-13 lines the CTP pocket. Residue Ser-13 coordinates UTP. Residue 14–19 (SLGKGI) participates in ATP binding. Residue Tyr-54 participates in L-glutamine binding. Asp-71 is an ATP binding site. Mg(2+) contacts are provided by Asp-71 and Glu-139. Residues 146 to 148 (DIE), 186 to 191 (KTKPTQ), and Lys-222 each bind CTP. UTP is bound by residues 186-191 (KTKPTQ) and Lys-222. The region spanning 291 to 541 (TIAVVGKYTG…IEAAIEQSRL (251 aa)) is the Glutamine amidotransferase type-1 domain. Residue Gly-353 participates in L-glutamine binding. Residue Cys-380 is the Nucleophile; for glutamine hydrolysis of the active site. L-glutamine-binding positions include 381–384 (FGMQ), Glu-404, and Arg-469. Residues His-514 and Glu-516 contribute to the active site.

The protein belongs to the CTP synthase family. Homotetramer.

The enzyme catalyses UTP + L-glutamine + ATP + H2O = CTP + L-glutamate + ADP + phosphate + 2 H(+). It catalyses the reaction L-glutamine + H2O = L-glutamate + NH4(+). The catalysed reaction is UTP + NH4(+) + ATP = CTP + ADP + phosphate + 2 H(+). It participates in pyrimidine metabolism; CTP biosynthesis via de novo pathway; CTP from UDP: step 2/2. Its activity is regulated as follows. Allosterically activated by GTP, when glutamine is the substrate; GTP has no effect on the reaction when ammonia is the substrate. The allosteric effector GTP functions by stabilizing the protein conformation that binds the tetrahedral intermediate(s) formed during glutamine hydrolysis. Inhibited by the product CTP, via allosteric rather than competitive inhibition. Its function is as follows. Catalyzes the ATP-dependent amination of UTP to CTP with either L-glutamine or ammonia as the source of nitrogen. Regulates intracellular CTP levels through interactions with the four ribonucleotide triphosphates. The sequence is that of CTP synthase from Brucella melitensis biotype 2 (strain ATCC 23457).